The chain runs to 363 residues: Cytoplasmic envelopment protein 2 (363 aa).

Belongs to the herpesviridae cytoplasmic envelopment protein 2 family. As to quaternary structure, interacts with cytoplasmic envelopment protein 3 and with the capsid.

The protein resides in the virion tegument. Its subcellular location is the host cytoplasm. It is found in the host nucleus. In terms of biological role, plays a critical role in cytoplasmic virus egress. Participates in the final step of tegumentation and envelope acquisition within the host cytoplasm by directly interacting with the capsid. Upon virion binding to target cell, a signaling cascade is triggered to disrupt the interaction with the capsid, thereby preparing capsid uncoating. This chain is Cytoplasmic envelopment protein 2 (44), found in Varicella-zoster virus (strain Dumas) (HHV-3).